The primary structure comprises 291 residues: tRNA U34 carboxymethyltransferase (291 aa).

Carboxy-S-adenosyl-L-methionine contacts are provided by residues Lys-61, Trp-75, Lys-80, Gly-100, 122-124 (DPS), 149-150 (VE), Tyr-169, and Arg-284.

The protein belongs to the class I-like SAM-binding methyltransferase superfamily. CmoB family. As to quaternary structure, homotetramer.

It carries out the reaction carboxy-S-adenosyl-L-methionine + 5-hydroxyuridine(34) in tRNA = 5-carboxymethoxyuridine(34) in tRNA + S-adenosyl-L-homocysteine + H(+). In terms of biological role, catalyzes carboxymethyl transfer from carboxy-S-adenosyl-L-methionine (Cx-SAM) to 5-hydroxyuridine (ho5U) to form 5-carboxymethoxyuridine (cmo5U) at position 34 in tRNAs. The chain is tRNA U34 carboxymethyltransferase from Campylobacter jejuni subsp. jejuni serotype O:6 (strain 81116 / NCTC 11828).